A 559-amino-acid chain; its full sequence is Formate--tetrahydrofolate ligase (559 aa).

An ATP-binding site is contributed by threonine 68–threonine 75.

This sequence belongs to the formate--tetrahydrofolate ligase family.

It carries out the reaction (6S)-5,6,7,8-tetrahydrofolate + formate + ATP = (6R)-10-formyltetrahydrofolate + ADP + phosphate. The protein operates within one-carbon metabolism; tetrahydrofolate interconversion. This chain is Formate--tetrahydrofolate ligase, found in Rhizobium johnstonii (strain DSM 114642 / LMG 32736 / 3841) (Rhizobium leguminosarum bv. viciae).